The sequence spans 236 residues: DNA repair protein RecO (236 aa).

Belongs to the RecO family.

In terms of biological role, involved in DNA repair and RecF pathway recombination. This chain is DNA repair protein RecO, found in Cellvibrio japonicus (strain Ueda107) (Pseudomonas fluorescens subsp. cellulosa).